The primary structure comprises 408 residues: Multidrug resistance protein MdtG (408 aa).

Transmembrane regions (helical) follow at residues 13 to 33, 51 to 71, 89 to 109, 112 to 132, 138 to 158, 170 to 190, 221 to 241, 253 to 273, 287 to 307, and 375 to 395; these read LYIA…VMPF, LWSG…SPFW, LGMA…QFLL, AALG…AIQV, GWAL…GPLL, PVFF…FFFI, LFVT…ILTL, LAFI…LSAP, ILVA…FVQS, and AVFL…WLSL.

Belongs to the major facilitator superfamily. DHA1 family. MdtG (TC 2.A.1.2.20) subfamily.

It localises to the cell inner membrane. The protein is Multidrug resistance protein MdtG of Dickeya zeae (strain Ech586) (Dickeya dadantii (strain Ech586)).